Reading from the N-terminus, the 82-residue chain is Sulfur carrier protein TusA (82 aa).

The active-site Cysteine persulfide intermediate is cysteine 20.

It belongs to the sulfur carrier protein TusA family.

It is found in the cytoplasm. Sulfur carrier protein which probably makes part of a sulfur-relay system. The chain is Sulfur carrier protein TusA from Aeromonas hydrophila subsp. hydrophila (strain ATCC 7966 / DSM 30187 / BCRC 13018 / CCUG 14551 / JCM 1027 / KCTC 2358 / NCIMB 9240 / NCTC 8049).